The chain runs to 379 residues: Cystathionine gamma-lyase (379 aa).

N6-(pyridoxal phosphate)lysine is present on K195.

The protein belongs to the trans-sulfuration enzymes family. Requires pyridoxal 5'-phosphate as cofactor.

It catalyses the reaction L,L-cystathionine + H2O = 2-oxobutanoate + L-cysteine + NH4(+). The catalysed reaction is L-homocysteine + H2O = 2-oxobutanoate + hydrogen sulfide + NH4(+) + H(+). Its function is as follows. Catalyzes the conversion of cystathionine to cysteine, and homocysteine to sulfide. The chain is Cystathionine gamma-lyase (mccB) from Bacillus subtilis (strain 168).